The primary structure comprises 565 residues: CTP synthase (565 aa).

The interval 1-268 (MQTKYIFVTG…GELVVDRFYP (268 aa)) is amidoligase domain. Ser-14 is a binding site for CTP. Ser-14 serves as a coordination point for UTP. 15–20 (SLGKGI) contacts ATP. Position 55 (Tyr-55) interacts with L-glutamine. Asp-72 lines the ATP pocket. 2 residues coordinate Mg(2+): Asp-72 and Glu-142. Residues 149–151 (DIE), 189–194 (KTKPTQ), and Lys-225 contribute to the CTP site. UTP is bound by residues 189 to 194 (KTKPTQ) and Lys-225. Positions 301 to 543 (PIALVGKYVE…VRACTAYAHE (243 aa)) constitute a Glutamine amidotransferase type-1 domain. Gly-363 serves as a coordination point for L-glutamine. Cys-390 acts as the Nucleophile; for glutamine hydrolysis in catalysis. L-glutamine is bound by residues 391-394 (LGLQ), Glu-414, and Arg-471. Residues His-516 and Glu-518 contribute to the active site. A disordered region spans residues 545-565 (DLVTSPQPPERKAVPLASVDM).

This sequence belongs to the CTP synthase family. Homotetramer.

It catalyses the reaction UTP + L-glutamine + ATP + H2O = CTP + L-glutamate + ADP + phosphate + 2 H(+). The catalysed reaction is L-glutamine + H2O = L-glutamate + NH4(+). It carries out the reaction UTP + NH4(+) + ATP = CTP + ADP + phosphate + 2 H(+). It participates in pyrimidine metabolism; CTP biosynthesis via de novo pathway; CTP from UDP: step 2/2. Allosterically activated by GTP, when glutamine is the substrate; GTP has no effect on the reaction when ammonia is the substrate. The allosteric effector GTP functions by stabilizing the protein conformation that binds the tetrahedral intermediate(s) formed during glutamine hydrolysis. Inhibited by the product CTP, via allosteric rather than competitive inhibition. Its function is as follows. Catalyzes the ATP-dependent amination of UTP to CTP with either L-glutamine or ammonia as the source of nitrogen. Regulates intracellular CTP levels through interactions with the four ribonucleotide triphosphates. This Salinibacter ruber (strain DSM 13855 / M31) protein is CTP synthase.